The sequence spans 104 residues: MNNTEFHELVDEKLQLIEDMIDDSGADIEPVITGNVLTLEFENRSQIVINKQEPMHEIWLASKSGGFHFSYVDEKWTCSKTGMEFIEMVKEECQKHADEEIEWA.

Belongs to the frataxin family.

Involved in iron-sulfur (Fe-S) cluster assembly. May act as a regulator of Fe-S biogenesis. This Aliivibrio fischeri (strain ATCC 700601 / ES114) (Vibrio fischeri) protein is Iron-sulfur cluster assembly protein CyaY.